The sequence spans 141 residues: MPDAVGRELPRDGTVLAFDYGEKKIGVALGNFITREARALTILPNITVEGRFEAVAALIQAWNPVQLIVGMPVNPEGGEQPSMKLARRFGNQLNGRFGLPVEWVDERYTSRAASMAGARRGELDAEAARIILQQYFDQFPL.

It belongs to the YqgF nuclease family.

It is found in the cytoplasm. Could be a nuclease involved in processing of the 5'-end of pre-16S rRNA. In Cupriavidus taiwanensis (strain DSM 17343 / BCRC 17206 / CCUG 44338 / CIP 107171 / LMG 19424 / R1) (Ralstonia taiwanensis (strain LMG 19424)), this protein is Putative pre-16S rRNA nuclease.